The primary structure comprises 196 residues: ATP-dependent Clp protease proteolytic subunit (196 aa).

The Nucleophile role is filled by serine 101. Residue histidine 126 is part of the active site.

It belongs to the peptidase S14 family. In terms of assembly, component of the chloroplastic Clp protease core complex.

It is found in the plastid. It localises to the chloroplast stroma. The enzyme catalyses Hydrolysis of proteins to small peptides in the presence of ATP and magnesium. alpha-casein is the usual test substrate. In the absence of ATP, only oligopeptides shorter than five residues are hydrolyzed (such as succinyl-Leu-Tyr-|-NHMec, and Leu-Tyr-Leu-|-Tyr-Trp, in which cleavage of the -Tyr-|-Leu- and -Tyr-|-Trp bonds also occurs).. Its function is as follows. Cleaves peptides in various proteins in a process that requires ATP hydrolysis. Has a chymotrypsin-like activity. Plays a major role in the degradation of misfolded proteins. The chain is ATP-dependent Clp protease proteolytic subunit from Citrus sinensis (Sweet orange).